A 137-amino-acid chain; its full sequence is Large ribosomal subunit protein uL16 (137 aa).

The protein belongs to the universal ribosomal protein uL16 family. As to quaternary structure, part of the 50S ribosomal subunit.

Its function is as follows. Binds 23S rRNA and is also seen to make contacts with the A and possibly P site tRNAs. This is Large ribosomal subunit protein uL16 from Rhizobium johnstonii (strain DSM 114642 / LMG 32736 / 3841) (Rhizobium leguminosarum bv. viciae).